We begin with the raw amino-acid sequence, 311 residues long: Olfactory receptor 10G8 (311 aa).

Topologically, residues 1–23 (MSNASLLTAFILMGLPHAPALDA) are extracellular. The N-linked (GlcNAc...) asparagine glycan is linked to asparagine 3. Residues 24-44 (PLFGVFLVVYVLTVLGNLLIL) traverse the membrane as a helical segment. The Cytoplasmic portion of the chain corresponds to 45–52 (LVIRVDSH). Residues 53–73 (LHTTMYYFLTNLSFIDMWFST) form a helical membrane-spanning segment. At 74-98 (VTVPKLLMTLVFPSGRAISFHSCMA) the chain is on the extracellular side. Cysteine 96 and cysteine 188 form a disulfide bridge. Residues 99–119 (QLYFFHFLGGTECFLYRVMSC) form a helical membrane-spanning segment. Over 120 to 138 (DRYLAISYPLRYTSMMTGR) the chain is Cytoplasmic. Residues 139 to 159 (SCTLLATSTWLSGSLHSAVQA) traverse the membrane as a helical segment. Residues 160–196 (ILTFHLPYCGPNWIQHYLCDAPPILKLACADTSAIET) are Extracellular-facing. The chain crosses the membrane as a helical span at residues 197–216 (VIFVTVGIVASGCFVLIVLS). Over 217 to 236 (YVSIVCSILRIRTSEGKHRA) the chain is Cytoplasmic. A helical transmembrane segment spans residues 237-257 (FQTCASHCIVVLCFFGPGLFI). Residues 258-268 (YLRPGSRKAVD) are Extracellular-facing. The chain crosses the membrane as a helical span at residues 269-289 (GVVAVFYTVLTPLLNPVVYTL). Residues 290-311 (RNKEVKKALLKLKDKVAHSQSK) lie on the Cytoplasmic side of the membrane.

It belongs to the G-protein coupled receptor 1 family.

It localises to the cell membrane. Its function is as follows. Odorant receptor. The protein is Olfactory receptor 10G8 (OR10G8) of Homo sapiens (Human).